The primary structure comprises 374 residues: Putative 12-oxophytodienoate reductase 5 (374 aa).

FMN is bound by residues 30 to 32 (PMT), alanine 63, and glutamine 105. 177-180 (HGAN) contacts substrate. Catalysis depends on tyrosine 182, which acts as the Proton donor. FMN is bound at residue arginine 229. Arginine 270 contacts substrate. FMN is bound by residues glycine 300 and 321 to 322 (GR).

This sequence belongs to the NADH:flavin oxidoreductase/NADH oxidase family. FMN serves as cofactor.

Functionally, putative oxophytodienoate reductase that may be involved in the biosynthesis or metabolism of oxylipin signaling molecules. This Oryza sativa subsp. japonica (Rice) protein is Putative 12-oxophytodienoate reductase 5 (OPR5).